Reading from the N-terminus, the 93-residue chain is Small ribosomal subunit protein uS19 (93 aa).

It belongs to the universal ribosomal protein uS19 family.

Protein S19 forms a complex with S13 that binds strongly to the 16S ribosomal RNA. This chain is Small ribosomal subunit protein uS19, found in Agathobacter rectalis (strain ATCC 33656 / DSM 3377 / JCM 17463 / KCTC 5835 / VPI 0990) (Eubacterium rectale).